The chain runs to 149 residues: uncharacterized protein (149 aa).

A helical membrane pass occupies residues 12–31 (FKNLVIGAVSGVAAAYFLST).

It is found in the membrane. This is an uncharacterized protein from Streptococcus pyogenes serotype M6 (strain ATCC BAA-946 / MGAS10394).